We begin with the raw amino-acid sequence, 389 residues long: Aminomethyltransferase (389 aa).

Belongs to the GcvT family. The glycine cleavage system is composed of four proteins: P, T, L and H.

It carries out the reaction N(6)-[(R)-S(8)-aminomethyldihydrolipoyl]-L-lysyl-[protein] + (6S)-5,6,7,8-tetrahydrofolate = N(6)-[(R)-dihydrolipoyl]-L-lysyl-[protein] + (6R)-5,10-methylene-5,6,7,8-tetrahydrofolate + NH4(+). In terms of biological role, the glycine cleavage system catalyzes the degradation of glycine. This is Aminomethyltransferase from Corynebacterium jeikeium (strain K411).